A 263-amino-acid polypeptide reads, in one-letter code: tRNA (guanine-N(1)-)-methyltransferase (263 aa).

S-adenosyl-L-methionine is bound by residues Gly124 and 144–149 (LGDFVL).

It belongs to the RNA methyltransferase TrmD family. Homodimer.

The protein resides in the cytoplasm. It catalyses the reaction guanosine(37) in tRNA + S-adenosyl-L-methionine = N(1)-methylguanosine(37) in tRNA + S-adenosyl-L-homocysteine + H(+). Functionally, specifically methylates guanosine-37 in various tRNAs. This chain is tRNA (guanine-N(1)-)-methyltransferase, found in Aromatoleum aromaticum (strain DSM 19018 / LMG 30748 / EbN1) (Azoarcus sp. (strain EbN1)).